A 613-amino-acid chain; its full sequence is Dihydroxy-acid dehydratase (613 aa).

Position 81 (D81) interacts with Mg(2+). [2Fe-2S] cluster is bound at residue C122. Mg(2+)-binding residues include D123 and K124. K124 bears the N6-carboxylysine mark. C195 serves as a coordination point for [2Fe-2S] cluster. E491 provides a ligand contact to Mg(2+). Catalysis depends on S517, which acts as the Proton acceptor.

This sequence belongs to the IlvD/Edd family. In terms of assembly, homodimer. It depends on [2Fe-2S] cluster as a cofactor. The cofactor is Mg(2+).

It carries out the reaction (2R)-2,3-dihydroxy-3-methylbutanoate = 3-methyl-2-oxobutanoate + H2O. The catalysed reaction is (2R,3R)-2,3-dihydroxy-3-methylpentanoate = (S)-3-methyl-2-oxopentanoate + H2O. The protein operates within amino-acid biosynthesis; L-isoleucine biosynthesis; L-isoleucine from 2-oxobutanoate: step 3/4. It participates in amino-acid biosynthesis; L-valine biosynthesis; L-valine from pyruvate: step 3/4. Its function is as follows. Functions in the biosynthesis of branched-chain amino acids. Catalyzes the dehydration of (2R,3R)-2,3-dihydroxy-3-methylpentanoate (2,3-dihydroxy-3-methylvalerate) into 2-oxo-3-methylpentanoate (2-oxo-3-methylvalerate) and of (2R)-2,3-dihydroxy-3-methylbutanoate (2,3-dihydroxyisovalerate) into 2-oxo-3-methylbutanoate (2-oxoisovalerate), the penultimate precursor to L-isoleucine and L-valine, respectively. This is Dihydroxy-acid dehydratase from Aeromonas salmonicida (strain A449).